Reading from the N-terminus, the 364-residue chain is MSCIAVEAVLLGILLYIPIVLSDDRAPIPSNSAQLNSWFDGIIQPVAVRKATMDPALVTAEGQTKVIKLKSDGSGDFKSINEAIKSIPDDNTKRVILSLAPGNYSEKVKIGMYKHYITFYGEDPNNMPILVFGGTAAEYGTVDSATLIVESNYFSAVNLKIVNSAPRPDGKRVGAQAAALRISGDKASFYNVKIYGFQDTLCDDKGKHFYKDCYIEGTVDFIFGSGKSIFLNTELHAVPGDQPAIITAQARKTDSEDTGYYFVNCRVTGGGAFLGRSWMPAAKVVFAYTEMVDAIHPEGWILVKPEHESTVRFSEYNNKGPGANMEKRAKFVKRLSDAEAKQSISLGSIEASKWLLPPRVVGLP.

The first 22 residues, 1-22 (MSCIAVEAVLLGILLYIPIVLS), serve as a signal peptide directing secretion. N103 is a glycosylation site (N-linked (GlcNAc...) asparagine). D220 is a catalytic residue.

It belongs to the pectinesterase family. Post-translationally, glycosylated. In terms of tissue distribution, expressed in pollen.

It localises to the secreted. It carries out the reaction [(1-&gt;4)-alpha-D-galacturonosyl methyl ester](n) + n H2O = [(1-&gt;4)-alpha-D-galacturonosyl](n) + n methanol + n H(+). It functions in the pathway glycan metabolism; pectin degradation; 2-dehydro-3-deoxy-D-gluconate from pectin: step 1/5. In terms of biological role, catalyzes the demethylesterification of homogalacturonan components of pectin. May be involved in pollen tube development. In Olea europaea (Common olive), this protein is Pectinesterase 1.